The chain runs to 490 residues: Bifunctional protein HldE (490 aa).

The interval M1 to A330 is ribokinase. N205 to E208 is a binding site for ATP. The active site involves D275. Residues F358 to T490 are cytidylyltransferase.

It in the N-terminal section; belongs to the carbohydrate kinase PfkB family. This sequence in the C-terminal section; belongs to the cytidylyltransferase family. As to quaternary structure, homodimer.

It catalyses the reaction D-glycero-beta-D-manno-heptose 7-phosphate + ATP = D-glycero-beta-D-manno-heptose 1,7-bisphosphate + ADP + H(+). The catalysed reaction is D-glycero-beta-D-manno-heptose 1-phosphate + ATP + H(+) = ADP-D-glycero-beta-D-manno-heptose + diphosphate. Its pathway is nucleotide-sugar biosynthesis; ADP-L-glycero-beta-D-manno-heptose biosynthesis; ADP-L-glycero-beta-D-manno-heptose from D-glycero-beta-D-manno-heptose 7-phosphate: step 1/4. It functions in the pathway nucleotide-sugar biosynthesis; ADP-L-glycero-beta-D-manno-heptose biosynthesis; ADP-L-glycero-beta-D-manno-heptose from D-glycero-beta-D-manno-heptose 7-phosphate: step 3/4. Catalyzes the phosphorylation of D-glycero-D-manno-heptose 7-phosphate at the C-1 position to selectively form D-glycero-beta-D-manno-heptose-1,7-bisphosphate. Functionally, catalyzes the ADP transfer from ATP to D-glycero-beta-D-manno-heptose 1-phosphate, yielding ADP-D-glycero-beta-D-manno-heptose. This Rhodopseudomonas palustris (strain BisB5) protein is Bifunctional protein HldE.